The chain runs to 309 residues: tRNA pseudouridine synthase B (309 aa).

The active-site Nucleophile is aspartate 51.

The protein belongs to the pseudouridine synthase TruB family. Type 1 subfamily.

The enzyme catalyses uridine(55) in tRNA = pseudouridine(55) in tRNA. Responsible for synthesis of pseudouridine from uracil-55 in the psi GC loop of transfer RNAs. This chain is tRNA pseudouridine synthase B, found in Coxiella burnetii (strain RSA 331 / Henzerling II).